The following is a 320-amino-acid chain: Heterogeneous nuclear ribonucleoprotein A1 (320 aa).

Met1 bears the N-acetylmethionine mark. Ser2 is modified (N-acetylserine; in Heterogeneous nuclear ribonucleoprotein A1, N-terminally processed). A Phosphoserine modification is found at Ser2. Position 3 is an N6-acetyllysine; alternate (Lys3). Lys3 is covalently cross-linked (Glycyl lysine isopeptide (Lys-Gly) (interchain with G-Cter in SUMO2); alternate). Residues Ser4 and Ser6 each carry the phosphoserine modification. The tract at residues 4–94 (SESPKEPEQL…EPKRAVSRED (91 aa)) is globular A domain. Lys8 participates in a covalent cross-link: Glycyl lysine isopeptide (Lys-Gly) (interchain with G-Cter in SUMO2). RRM domains are found at residues 14–97 (RKLF…DSQR) and 105–184 (KKIF…LCKQ). Ser22 bears the Phosphoserine mark. Lys78 is covalently cross-linked (Glycyl lysine isopeptide (Lys-Gly) (interchain with G-Cter in SUMO2)). Residues 95–185 (SQRPGAHLTV…EVRKALCKQE (91 aa)) are globular B domain. A Glycyl lysine isopeptide (Lys-Gly) (interchain with G-Cter in SUMO) cross-link involves residue Lys113. Glycyl lysine isopeptide (Lys-Gly) (interchain with G-Cter in SUMO2) cross-links involve residues Lys179 and Lys183. Positions 188–216 (SASSSQRGRSGSGNFGGGRGGGFGGNDNF) are disordered. Phosphoserine; by MKNK2 is present on Ser192. Arg194 bears the Asymmetric dimethylarginine; alternate mark. Arg194 carries the post-translational modification Dimethylated arginine; alternate. Arg194 carries the post-translational modification Omega-N-methylarginine; alternate. Positions 197 to 216 (SGSGNFGGGRGGGFGGNDNF) are enriched in gly residues. At Ser199 the chain carries Phosphoserine. An asymmetric dimethylarginine; alternate mark is found at Arg206, Arg218, Arg225, and Arg232. Residue Arg206 is modified to Dimethylated arginine; alternate. Arg206, Arg218, Arg225, and Arg232 each carry omega-N-methylarginine; alternate. Residues 218–240 (RGGNFSGRGGFGGSRGGGGYGGS) form an RNA-binding RGG-box region. Dimethylated arginine; alternate is present on Arg225. Positions 268 to 305 (NQSSNFGPMKGGNFGGRSSGPYGGGGQYFAKPRNQGGY) are nuclear targeting sequence. Positions 271-320 (SNFGPMKGGNFGGRSSGPYGGGGQYFAKPRNQGGYGGSSSSSSYGSGRRF) are disordered. Over residues 276-294 (MKGGNFGGRSSGPYGGGGQ) the composition is skewed to gly residues. Arg284 is subject to Omega-N-methylarginine. A Phosphoserine modification is found at Ser285. Lys298 carries the post-translational modification N6-acetyllysine; alternate. Residue Lys298 forms a Glycyl lysine isopeptide (Lys-Gly) (interchain with G-Cter in SUMO2); alternate linkage. Arg300 is modified (omega-N-methylarginine). Positions 308 to 320 (SSSSSSYGSGRRF) are enriched in low complexity. Phosphoserine is present on Ser309. Ser310, Ser311, and Ser312 each carry phosphoserine; by MKNK2. Residues Ser313 and Ser316 each carry the phosphoserine modification. Omega-N-methylarginine is present on Arg318.

As to quaternary structure, identified in the spliceosome C complex. Identified in a IGF2BP1-dependent mRNP granule complex containing untranslated mRNAs. Interacts with SEPT6. Interacts with C9orf72. Interacts with KHDRBS1. Interacts with UBQLN2. Interacts with PPIA/CYPA. Post-translationally, sumoylated.

It localises to the nucleus. The protein localises to the cytoplasm. Its function is as follows. Involved in the packaging of pre-mRNA into hnRNP particles, transport of poly(A) mRNA from the nucleus to the cytoplasm and modulation of splice site selection. Plays a role in the splicing of pyruvate kinase PKM by binding repressively to sequences flanking PKM exon 9, inhibiting exon 9 inclusion and resulting in exon 10 inclusion and production of the PKM M2 isoform. Binds to the IRES and thereby inhibits the translation of the apoptosis protease activating factor APAF1. May bind to specific miRNA hairpins. The chain is Heterogeneous nuclear ribonucleoprotein A1 (Hnrnpa1) from Rattus norvegicus (Rat).